Here is a 291-residue protein sequence, read N- to C-terminus: ATP synthase gamma chain (291 aa).

This sequence belongs to the ATPase gamma chain family. F-type ATPases have 2 components, CF(1) - the catalytic core - and CF(0) - the membrane proton channel. CF(1) has five subunits: alpha(3), beta(3), gamma(1), delta(1), epsilon(1). CF(0) has three main subunits: a, b and c.

Its subcellular location is the cell inner membrane. In terms of biological role, produces ATP from ADP in the presence of a proton gradient across the membrane. The gamma chain is believed to be important in regulating ATPase activity and the flow of protons through the CF(0) complex. This Methylobacillus flagellatus (strain ATCC 51484 / DSM 6875 / VKM B-1610 / KT) protein is ATP synthase gamma chain.